The chain runs to 133 residues: Hemiptericin (133 aa).

Antibacterial peptide. Affects Gram-negative bacteria. The chain is Hemiptericin from Pyrrhocoris apterus (Sap sucking bug).